Consider the following 384-residue polypeptide: Beta-lactamase (384 aa).

The N-terminal stretch at 1 to 29 (MDNSMKNIFRQGRLFIALSLAMTSISAFA) is a signal peptide. S87 acts as the Acyl-ester intermediate in catalysis. Y172 acts as the Proton acceptor in catalysis. 337-339 (KTG) is a binding site for substrate.

It belongs to the class-C beta-lactamase family.

It is found in the periplasm. The enzyme catalyses a beta-lactam + H2O = a substituted beta-amino acid. In terms of biological role, this protein is a serine beta-lactamase with a substrate specificity for cephalosporins. In Providencia stuartii, this protein is Beta-lactamase (ampC).